Consider the following 86-residue polypeptide: Elongation factor 1-beta (86 aa).

It belongs to the EF-1-beta/EF-1-delta family.

Functionally, promotes the exchange of GDP for GTP in EF-1-alpha/GDP, thus allowing the regeneration of EF-1-alpha/GTP that could then be used to form the ternary complex EF-1-alpha/GTP/AAtRNA. This Methanocorpusculum labreanum (strain ATCC 43576 / DSM 4855 / Z) protein is Elongation factor 1-beta.